A 125-amino-acid chain; its full sequence is MTVSRVCLLLLVALVYLDCCYAASIPRNFDPRLSEEIVMAPKKRPFCNAFTGCGRKRSQGPPGMPAQDLRTKQYLDEEALGSILDSESAIDELSRQILSEAKLWEAIQEASAEIARRKQKEAYIQ.

The N-terminal stretch at 1–22 is a signal peptide; it reads MTVSRVCLLLLVALVYLDCCYA. Residues 23 to 42 constitute a propeptide that is removed on maturation; it reads ASIPRNFDPRLSEEIVMAPK. The cysteines at positions 47 and 53 are disulfide-linked. Cysteine amide is present on Cys-53. Positions 57–125 are excised as a propeptide; it reads RSQGPPGMPA…RRKQKEAYIQ (69 aa).

In terms of tissue distribution, abdominal perivisceral organ; major neurohemal release site. Expressed in 116 neurons in post-embryonic central nervous system. Nine pairs of cells are observed in the brain, 4.5 pairs in the subesophageal ganglion, three pairs in each thoracic ganglion (T1-T3), three pairs in the first abdominal ganglion (A1), five pairs each in the second to sixth abdominal ganglia (A2-A6) and 7.5 pairs in the terminal ganglion. Expressed in every ganglion in each post-embryonic stage, except in the thoracic ganglia of first- and second-instar larvae. Colocalizes with CAP2b in median neurosecretory cells during the last larval instar through to adults.

It is found in the secreted. Cardioregulatory neurohormone that increases heart beat rate during adult wing inflation; has no effect on beat amplitude. The effect of CCAP is both ino- and chronotropic. The polypeptide is Cardioactive peptide (Manduca sexta (Tobacco hawkmoth)).